Here is a 355-residue protein sequence, read N- to C-terminus: Homeobox protein knotted-1-like LET6 (355 aa).

Residues 75-96 are disordered; sequence PFMDNNNNNNPQEDNNSSSSSI. Over residues 79–96 the composition is skewed to low complexity; the sequence is NNNNNNPQEDNNSSSSSI. The 21-residue stretch at 237–257 folds into the ELK domain; that stretch reads ELKGQLLRKYSGYLGSLKQEF. Residues 258-321 constitute a DNA-binding region (homeobox; TALE-type); the sequence is MKKRKKGKLP…NQRKRHWKPS (64 aa).

It belongs to the TALE/KNOX homeobox family. Expressed in developing lateral organs and developing ovaries in flowers.

It localises to the nucleus. Functionally, may have a role to play in formative events in ovule and embryo morphogenesis. Probably binds to the DNA sequence 5'-TGAC-3'. In Solanum lycopersicum (Tomato), this protein is Homeobox protein knotted-1-like LET6 (LET6).